The sequence spans 301 residues: tRNA U34 carboxymethyltransferase (301 aa).

Residues K70, W84, K89, G108, 130-132, 157-158, Y177, and R292 each bind carboxy-S-adenosyl-L-methionine; these read DPS and VE.

The protein belongs to the class I-like SAM-binding methyltransferase superfamily. CmoB family. Homotetramer.

The enzyme catalyses carboxy-S-adenosyl-L-methionine + 5-hydroxyuridine(34) in tRNA = 5-carboxymethoxyuridine(34) in tRNA + S-adenosyl-L-homocysteine + H(+). Functionally, catalyzes carboxymethyl transfer from carboxy-S-adenosyl-L-methionine (Cx-SAM) to 5-hydroxyuridine (ho5U) to form 5-carboxymethoxyuridine (cmo5U) at position 34 in tRNAs. The protein is tRNA U34 carboxymethyltransferase of Sulfurovum sp. (strain NBC37-1).